The following is a 367-amino-acid chain: uncharacterized protein (367 aa).

Residues 333 to 367 (RERRPTLNAQRAHAAAQQQPRRRNRRQQGTGASAS) form a disordered region. The span at 341 to 351 (AQRAHAAAQQQ) shows a compositional bias: low complexity.

This is an uncharacterized protein from Amazona oratrix (yellow-headed parrot).